Reading from the N-terminus, the 1094-residue chain is Probable arabinosyltransferase C (1094 aa).

The next 13 membrane-spanning stretches (helical) occupy residues 28–50, 232–251, 264–286, 341–360, 373–392, 431–453, 466–488, 530–552, 565–582, 586–608, 620–642, 657–679, and 700–722; these read IARYVAVVAGLLGAVLAIATPLL, AAMILGVALTGAALVALHIL, PARWWSTGGLDTLVIAVLVWWHF, SIWMRLPTLAMALTCWWVIS, TSRAAAWTAAGMFLAVWLPL, IGALTLFSGPTGIASIGALLVAI, RFGVLPLVAPILAAATVTAIPIF, SIARRFAVLALVLALAVSVAMSL, SRRIIGITIISFLAMMFT, WTHHFGVFAGLAGSLGALAAVAV, TVFAAVVVFVLALSFASVNGWWY, WRWSLTTALLELTVLVLLLAAWF, and LAGIVQSPLAIATWLLVLFEVVS. Residues 817–831 show a composition bias toward low complexity; the sequence is GSEPGTEGGTTAAPG. Positions 817–836 are disordered; the sequence is GSEPGTEGGTTAAPGINGSR.

This sequence belongs to the emb family.

It is found in the cell membrane. Its function is as follows. Arabinosyl transferase responsible for the polymerization of arabinose into the arabinan of arabinogalactan. The polypeptide is Probable arabinosyltransferase C (embC) (Mycobacterium tuberculosis (strain ATCC 25618 / H37Rv)).